We begin with the raw amino-acid sequence, 53 residues long: UPF0391 membrane protein msr4317 (53 aa).

The next 2 helical transmembrane spans lie at 4 to 24 (WIII…PALA) and 33 to 53 (ILIG…FAVT).

Belongs to the UPF0391 family.

Its subcellular location is the cell membrane. The protein is UPF0391 membrane protein msr4317 of Mesorhizobium japonicum (strain LMG 29417 / CECT 9101 / MAFF 303099) (Mesorhizobium loti (strain MAFF 303099)).